The chain runs to 103 residues: MESVQELIPLAKEMMTQKSRGKLVKLYVLGSVLAFFGVVLGLVETVCSPFTAASRLRDQEAAVAELRDACEQQSLHKQALIAEGKTQEATLCSRALSLRQHAS.

As to quaternary structure, directly interacts with BCL2; this interaction prevents the formation of the anti-apoptotic BAX-BCL2 complex.

It localises to the mitochondrion. Promotes apoptosis by binding to BCL2, hence preventing the formation of protective BCL2-BAX heterodimers. In Rattus norvegicus (Rat), this protein is G0/G1 switch protein 2 (G0s2).